The sequence spans 1366 residues: DNA-directed RNA polymerase subunit beta' (1366 aa).

The span at 1–20 (MTSSKPKKTSRVRKTTKNSK) shows a compositional bias: basic residues. The disordered stretch occupies residues 1–37 (MTSSKPKKTSRVRKTTKNSKKNNPVTMPVLPKTPPSF). Zn(2+) contacts are provided by cysteine 248, cysteine 315, cysteine 322, and cysteine 325. The segment at 1292 to 1366 (TVDMPQSPAV…LQEEGLLSDE (75 aa)) is disordered. The span at 1354 to 1366 (LEGLQEEGLLSDE) shows a compositional bias: low complexity.

It belongs to the RNA polymerase beta' chain family. RpoC2 subfamily. As to quaternary structure, in cyanobacteria the RNAP catalytic core is composed of 2 alpha, 1 beta, 1 beta', 1 gamma and 1 omega subunit. When a sigma factor is associated with the core the holoenzyme is formed, which can initiate transcription. Zn(2+) serves as cofactor.

It carries out the reaction RNA(n) + a ribonucleoside 5'-triphosphate = RNA(n+1) + diphosphate. Its function is as follows. DNA-dependent RNA polymerase catalyzes the transcription of DNA into RNA using the four ribonucleoside triphosphates as substrates. In Prochlorococcus marinus (strain MIT 9215), this protein is DNA-directed RNA polymerase subunit beta'.